Consider the following 271-residue polypeptide: Neurexophilin-1 (271 aa).

The signal sequence occupies residues 1–21 (MQAACWYVLLLLQPTVYLVTC). An II region spans residues 22–97 (ANLTNGGKSE…WDWLRNSTDL (76 aa)). Asn23, Asn68, Asn93, Asn146, Asn156, and Asn162 each carry an N-linked (GlcNAc...) asparagine glycan. Positions 98–176 (QEPRPRAKRR…LVPPTKIVEF (79 aa)) are III. The IV (linker domain) stretch occupies residues 177–185 (DLAQQTVID). Residues 186–271 (AKDSKSFNCR…HSDTPYFPSG (86 aa)) form a v (Cys-rich) region.

This sequence belongs to the neurexophilin family. May be proteolytically processed at the boundary between the N-terminal non-conserved and the central conserved domain in neuron-like cells. As to expression, brain, only in a scattered subpopulation of neurons that probably represent inhibitory interneurons.

The protein resides in the secreted. Functionally, may be signaling molecules that resemble neuropeptides. Ligand for alpha-neurexins. In Mus musculus (Mouse), this protein is Neurexophilin-1 (Nxph1).